Reading from the N-terminus, the 28-residue chain is Chaperonin GroEL (28 aa).

It belongs to the chaperonin (HSP60) family. As to quaternary structure, forms a cylinder of 14 subunits composed of two heptameric rings stacked back-to-back. Interacts with the co-chaperonin GroES.

It localises to the cytoplasm. It carries out the reaction ATP + H2O + a folded polypeptide = ADP + phosphate + an unfolded polypeptide.. In terms of biological role, together with its co-chaperonin GroES, plays an essential role in assisting protein folding. The GroEL-GroES system forms a nano-cage that allows encapsulation of the non-native substrate proteins and provides a physical environment optimized to promote and accelerate protein folding. The protein is Chaperonin GroEL of Mycolicibacterium smegmatis (Mycobacterium smegmatis).